Consider the following 317-residue polypeptide: Ribosomal protein L11 methyltransferase (317 aa).

The S-adenosyl-L-methionine site is built by Thr-158, Gly-179, Asp-201, and Asn-244.

Belongs to the methyltransferase superfamily. PrmA family.

It localises to the cytoplasm. It catalyses the reaction L-lysyl-[protein] + 3 S-adenosyl-L-methionine = N(6),N(6),N(6)-trimethyl-L-lysyl-[protein] + 3 S-adenosyl-L-homocysteine + 3 H(+). In terms of biological role, methylates ribosomal protein L11. This is Ribosomal protein L11 methyltransferase from Lactococcus lactis subsp. cremoris (strain MG1363).